We begin with the raw amino-acid sequence, 337 residues long: Biotin synthase (337 aa).

Positions 55-284 constitute a Radical SAM core domain; the sequence is YFKNTIELCS…KKTILLAGGK (230 aa). Residues cysteine 73, cysteine 77, and cysteine 80 each coordinate [4Fe-4S] cluster. 3 residues coordinate [2Fe-2S] cluster: cysteine 117, cysteine 149, and cysteine 209.

The protein belongs to the radical SAM superfamily. Biotin synthase family. In terms of assembly, homodimer. The cofactor is [4Fe-4S] cluster. It depends on [2Fe-2S] cluster as a cofactor.

It catalyses the reaction (4R,5S)-dethiobiotin + (sulfur carrier)-SH + 2 reduced [2Fe-2S]-[ferredoxin] + 2 S-adenosyl-L-methionine = (sulfur carrier)-H + biotin + 2 5'-deoxyadenosine + 2 L-methionine + 2 oxidized [2Fe-2S]-[ferredoxin]. It functions in the pathway cofactor biosynthesis; biotin biosynthesis; biotin from 7,8-diaminononanoate: step 2/2. Functionally, catalyzes the conversion of dethiobiotin (DTB) to biotin by the insertion of a sulfur atom into dethiobiotin via a radical-based mechanism. The chain is Biotin synthase from Caldicellulosiruptor bescii (strain ATCC BAA-1888 / DSM 6725 / KCTC 15123 / Z-1320) (Anaerocellum thermophilum).